Reading from the N-terminus, the 279-residue chain is ESX-1 secretion-associated protein EspG1 (279 aa).

Belongs to the EspG family. Interacts specifically with ESX-1-dependent PE/PPE proteins.

The protein localises to the cytoplasm. Specific chaperone for cognate PE/PPE proteins. Plays an important role in preventing aggregation of PE/PPE dimers. The sequence is that of ESX-1 secretion-associated protein EspG1 from Mycobacterium marinum (strain ATCC BAA-535 / M).